Here is a 167-residue protein sequence, read N- to C-terminus: Mediator of RNA polymerase II transcription subunit 10 (167 aa).

Positions 141–158 (TGGRTVGGEGEGAGQGEG) are enriched in gly residues. The tract at residues 141-167 (TGGRTVGGEGEGAGQGEGGEGRGEGGN) is disordered.

The protein belongs to the Mediator complex subunit 10 family. As to quaternary structure, component of the Mediator complex.

It is found in the nucleus. Functionally, component of the Mediator complex, a coactivator involved in the regulated transcription of nearly all RNA polymerase II-dependent genes. Mediator functions as a bridge to convey information from gene-specific regulatory proteins to the basal RNA polymerase II transcription machinery. Mediator is recruited to promoters by direct interactions with regulatory proteins and serves as a scaffold for the assembly of a functional preinitiation complex with RNA polymerase II and the general transcription factors. This is Mediator of RNA polymerase II transcription subunit 10 (NUT2) from Chaetomium globosum (strain ATCC 6205 / CBS 148.51 / DSM 1962 / NBRC 6347 / NRRL 1970) (Soil fungus).